Consider the following 275-residue polypeptide: MARFALTIVRHGETRYNKEKLLQGQGIDEPLSEIGFKQADAVGRFLSNVRFTHVFSSDLIRAKQTACAIMENNKISEDIKIIYDRRLRERKYGDAEGRPLSELKVMAKKAGDQCPSYTPPGGETLEQVRARAKDFFEYLCRLVLEESSAKEQSELGASGMGGVTSADLGPFVNHNKEPAELGESRDVTVHASVLLVSHGAYMRNWIKYLVEDLQFTFPPELKKSRELPVSPNTGISHFIVTVSSATPRKPEIQCVCINLHSHLSDINADTSHYQV.

H11 (tele-phosphohistidine intermediate) is an active-site residue. E89 (proton donor/acceptor) is an active-site residue.

It belongs to the phosphoglycerate mutase family.

The protein resides in the cytoplasm. It is found in the nucleus. Its subcellular location is the mitochondrion. It carries out the reaction beta-D-fructose 2,6-bisphosphate + H2O = beta-D-fructose 6-phosphate + phosphate. Fructose-bisphosphatase hydrolyzing fructose-2,6-bisphosphate as well as fructose-1,6-bisphosphate. Acts as a negative regulator of glycolysis by lowering intracellular levels of fructose-2,6-bisphosphate in a p53/TP53-dependent manner, resulting in the pentose phosphate pathway (PPP) activation and NADPH production. Contributes to the generation of reduced glutathione to cause a decrease in intracellular reactive oxygen species (ROS) content, correlating with its ability to protect cells from oxidative or metabolic stress-induced cell death. May play a role in mitophagy inhibition. The sequence is that of Fructose-2,6-bisphosphatase TIGAR from Xenopus tropicalis (Western clawed frog).